Reading from the N-terminus, the 295-residue chain is Sulfotransferase 1A2 (295 aa).

48–53 (KSGTTW) is a 3'-phosphoadenylyl sulfate binding site. 106–108 (KTH) is a substrate binding site. H108 acts as the Proton acceptor in catalysis. 3'-phosphoadenylyl sulfate-binding positions include R130, S138, Y193, 227–232 (TSFKEM), and 255–259 (FMRKG).

The protein belongs to the sulfotransferase 1 family. In terms of assembly, homodimer.

Its subcellular location is the cytoplasm. The catalysed reaction is a phenol + 3'-phosphoadenylyl sulfate = an aryl sulfate + adenosine 3',5'-bisphosphate + H(+). Functionally, sulfotransferase that utilizes 3'-phospho-5'-adenylyl sulfate (PAPS) as sulfonate donor to catalyze the sulfate conjugation of catecholamines, phenolic drugs and neurotransmitters. Is also responsible for the sulfonation and activation of minoxidil. Mediates the metabolic activation of carcinogenic N-hydroxyarylamines to DNA binding products and could so participate as modulating factor of cancer risk. The protein is Sulfotransferase 1A2 (SULT1A2) of Homo sapiens (Human).